Consider the following 67-residue polypeptide: Gallinacin-6 (67 aa).

A signal peptide spans 1–19 (MRILYLLLSVLFVVLQGVA). A propeptide spanning residues 20 to 25 (GQPYFS) is cleaved from the precursor. 3 cysteine pairs are disulfide-bonded: Cys31–Cys60, Cys38–Cys53, and Cys43–Cys61.

It belongs to the beta-defensin family. As to expression, expressed in bone marrow, testis, ovary, lung and trachea. Expressed in the ovarian stroma, but not in the ovarian follicles.

It is found in the secreted. The protein localises to the cytoplasmic granule. Its function is as follows. Has bactericidal activity. Potent activity against S.typhimurium and S.entiriditis. The protein is Gallinacin-6 (GAL6) of Gallus gallus (Chicken).